Here is a 979-residue protein sequence, read N- to C-terminus: Glutamate receptor ionotropic, kainate 5 (979 aa).

A signal peptide spans 1-14 (MPAELLLLLIVAFA). Residues 15–544 (NPSCQVLSSL…YFSFLDPFSP (530 aa)) are Extracellular-facing. 3 disulfides stabilise this stretch: Cys36/Cys292, Cys83/Cys334, and Cys165/Cys170. Residues Asn219, Asn271, Asn285, Asn322, Asn372, Asn394, Asn400, Asn407, Asn414, and Asn478 are each glycosylated (N-linked (GlcNAc...) asparagine). Residues 545–565 (AVWLFMLLAYLAVSCVLFLAA) form a helical membrane-spanning segment. Residues 566 to 622 (RLSPYEWYNPHPCLRARPHILENQYTLGNSLWFPVGGFMQQGSEIMPRALSTRCVSG) are Cytoplasmic-facing. The chain crosses the membrane as a helical span at residues 623 to 643 (VWWAFTLIIISSYTANLAAFL). At 644–803 (TVQRMEVPVE…HRAKGLGMEN (160 aa)) the chain is on the extracellular side. Asn735 carries an N-linked (GlcNAc...) asparagine glycan. A helical membrane pass occupies residues 804-824 (IGGIFVVLICGLIIAVFVAVM). The Cytoplasmic portion of the chain corresponds to 825–979 (EFIWSTRRSA…TGPRELTEHE (155 aa)). The span at 856–867 (RKTSRSRRRRRP) shows a compositional bias: basic residues. 3 disordered regions span residues 856–875 (RKTS…RALL), 890–925 (LYSA…APTP), and 942–979 (RASG…TEHE). Residues 894–903 (GAGGDAGAHG) are compositionally biased toward gly residues. Pro residues predominate over residues 912–923 (PGPPGGPRPQAP).

It belongs to the glutamate-gated ion channel (TC 1.A.10.1) family. GRIK5 subfamily. In terms of assembly, homotetramer. Heterotetramer with GRIK2. Can form functional heteromeric receptors with GRIK1, GRIK2 and GRIK3. Forms a heteromeric complex with GRIK2. In terms of tissue distribution, expressed in the hippocampal mossy fiber synapses (at protein level).

It localises to the cell membrane. It is found in the postsynaptic cell membrane. Its subcellular location is the presynaptic cell membrane. In terms of biological role, ionotropic glutamate receptor that functions as a cation-permeable ligand-gated ion channel, gated by L-glutamate and the glutamatergic agonist kainic acid. Cannot form functional channels on its own and produces channel activity only in heteromeric assembly with GRIK2 subunit. Can form functional heteromeric receptors with GRIK1 and GRIK3. The polypeptide is Glutamate receptor ionotropic, kainate 5 (Grik5) (Mus musculus (Mouse)).